The following is a 457-amino-acid chain: L-asparaginase-like protein GL17509 (457 aa).

The first 20 residues, 1 to 20 (MRYLCRAQLLSLLLLPLLKA), serve as a signal peptide directing secretion. 3 disulfides stabilise this stretch: C72-C78, C172-C188, and C327-C354.

Belongs to the Ntn-hydrolase family.

The protein is L-asparaginase-like protein GL17509 of Drosophila persimilis (Fruit fly).